A 397-amino-acid chain; its full sequence is MTSYTDKGEKPERGKFLNFHHIKFWVGNAKQAAVFYCDKFGFEPLAYKGLETGSREVVSHAVRQDKIIFVFESALNPGNEEMGEHMIKHGDGVKDVAFLVEDCDFLVKKAKERGAAVLKEPWVEQDAGGKVKYAIVQTYGDTTHTFVEYLGPYKGLFLPGYKEPLFRDPLLPKLPSGHLSFIDHIVGNQPDDEMVPVSDWYQKCLLFHRFWSIDDKQIHTEYSALRSIVVTNYEETIKMPINEPAMGKKKSQIQEYIDYNGGPGVQHIALNTSNIIQAIVNLRARGLEFLSAPDNYYESLREKLKTAKIKVKEDLKTLQELKILVDFDDKGYLLQIFTKPVQDRPTLFLEVIQRNNHFGFGAGNFKSLFEAIEKDQDARGNLTVLTAQNQSVSKAFQ.

VOC domains lie at 18–149 (NFHH…FVEY) and 181–339 (FIDH…IFTK). The Fe cation site is built by histidine 184, histidine 267, and glutamate 350.

The protein belongs to the 4HPPD family. Homodimer. Fe cation serves as cofactor.

It localises to the cytoplasm. The protein localises to the endoplasmic reticulum membrane. It is found in the golgi apparatus membrane. The enzyme catalyses 3-(4-hydroxyphenyl)pyruvate + O2 = homogentisate + CO2. Its pathway is amino-acid degradation; L-phenylalanine degradation; acetoacetate and fumarate from L-phenylalanine: step 3/6. In terms of biological role, catalyzes the conversion of 4-hydroxyphenylpyruvic acid to homogentisic acid, one of the steps in tyrosine catabolism. The chain is 4-hydroxyphenylpyruvate dioxygenase (hpd) from Danio rerio (Zebrafish).